Reading from the N-terminus, the 379-residue chain is Quinolinate synthase (379 aa).

2 residues coordinate iminosuccinate: histidine 60 and serine 81. [4Fe-4S] cluster is bound at residue cysteine 126. Iminosuccinate contacts are provided by residues 152–154 and serine 169; that span reads YAN. Cysteine 213 is a [4Fe-4S] cluster binding site. Residues 239-241 and threonine 256 contribute to the iminosuccinate site; that span reads HPE. Cysteine 310 contacts [4Fe-4S] cluster.

It belongs to the quinolinate synthase family. Type 1 subfamily. Requires [4Fe-4S] cluster as cofactor.

The protein resides in the cytoplasm. It catalyses the reaction iminosuccinate + dihydroxyacetone phosphate = quinolinate + phosphate + 2 H2O + H(+). Its pathway is cofactor biosynthesis; NAD(+) biosynthesis; quinolinate from iminoaspartate: step 1/1. Catalyzes the condensation of iminoaspartate with dihydroxyacetone phosphate to form quinolinate. The sequence is that of Quinolinate synthase from Herminiimonas arsenicoxydans.